Reading from the N-terminus, the 170-residue chain is Large ribosomal subunit protein uL15 (170 aa).

Basic and acidic residues predominate over residues 1 to 12 (MKLHDLRPAEGA). Residues 1-52 (MKLHDLRPAEGAHRKRKRIGRGHGSGKGKTGGKGMMGQKARSGPGPYRTFEG) form a disordered region. The segment covering 13 to 26 (HRKRKRIGRGHGSG) has biased composition (basic residues).

The protein belongs to the universal ribosomal protein uL15 family. In terms of assembly, part of the 50S ribosomal subunit.

Functionally, binds to the 23S rRNA. This is Large ribosomal subunit protein uL15 from Chloroflexus aurantiacus (strain ATCC 29366 / DSM 635 / J-10-fl).